The primary structure comprises 347 residues: MNSPDLWYSPETQFCFAAANNSCPRKARPALVVCAMYLVMIGAIVMTMLGNMVVIISIAHFKQLHSPTNFLILSMATTDFLLSCVVMPFSMVRSIESCWYFGDLFCKVHSCCDIMLCTTSIFHLCFISVDRHYAVCDPLHYVTQITVGVVGVFLLISWSVPILFAFGLVFSELNLIGAEDFVAAIDCTGLCVLIFNKLWGVLASFIAFFLPGAIMVGIYIHIFTVARKHARKIGPGPRTKRALSESKMKATSGKESKATKTLSIVMGVFVLCWLPFFVLTITDPFIGFTTPEDLYNVFLWLGYFNSTFNPIIYGMFYPWFRKALRMIVTGTIFRSDSSTSSLHPAHP.

Residues 1–37 lie on the Extracellular side of the membrane; the sequence is MNSPDLWYSPETQFCFAAANNSCPRKARPALVVCAMY. Asparagine 20 carries an N-linked (GlcNAc...) asparagine glycan. 2 disulfides stabilise this stretch: cysteine 23–cysteine 187 and cysteine 106–cysteine 191. Residues 38 to 58 form a helical membrane-spanning segment; sequence LVMIGAIVMTMLGNMVVIISI. Over 59 to 69 the chain is Cytoplasmic; that stretch reads AHFKQLHSPTN. The chain crosses the membrane as a helical span at residues 70-90; the sequence is FLILSMATTDFLLSCVVMPFS. The Extracellular segment spans residues 91–110; it reads MVRSIESCWYFGDLFCKVHS. A helical transmembrane segment spans residues 111–129; sequence CCDIMLCTTSIFHLCFISV. Residues 130-149 lie on the Cytoplasmic side of the membrane; it reads DRHYAVCDPLHYVTQITVGV. Residues 150–170 traverse the membrane as a helical segment; it reads VGVFLLISWSVPILFAFGLVF. Topologically, residues 171–197 are extracellular; the sequence is SELNLIGAEDFVAAIDCTGLCVLIFNK. Residues 175 to 188 form an extracellular Loop 2 (ECL2) region; that stretch reads LIGAEDFVAAIDCT. A helical membrane pass occupies residues 198–218; the sequence is LWGVLASFIAFFLPGAIMVGI. Residues 219–260 lie on the Cytoplasmic side of the membrane; sequence YIHIFTVARKHARKIGPGPRTKRALSESKMKATSGKESKATK. A helical transmembrane segment spans residues 261–281; it reads TLSIVMGVFVLCWLPFFVLTI. Residues 282-296 lie on the Extracellular side of the membrane; the sequence is TDPFIGFTTPEDLYN. Residues 297–317 form a helical membrane-spanning segment; the sequence is VFLWLGYFNSTFNPIIYGMFY. The Cytoplasmic segment spans residues 318–347; the sequence is PWFRKALRMIVTGTIFRSDSSTSSLHPAHP.

The protein belongs to the G-protein coupled receptor 1 family.

Its subcellular location is the cell membrane. In terms of biological role, olfactory receptor specific for 2-phenylethylamine, a trace amine present at high concentration in the urine of carnivore species, playing a key role in fear and avoidance responses. 2-phenylethylamine acts as a kairomone in the chemical detection of carnivore odor and triggers fear in rats. This receptor is probably mediated by the G(s)-class of G-proteins which activate adenylate cyclase. The chain is Trace amine-associated receptor 4 from Rattus norvegicus (Rat).